We begin with the raw amino-acid sequence, 340 residues long: MNQLIQAQKKLLPDLLLVMQKRFEILQYIRLTEPIGRRSLSASLGISERVLRGEVQFLKEQNLVDIKTNGMTLTEEGYELLSVLEDTMKDVLGLTLLEKTLKERLNLKDAIIVSGDSDQSPWVKKEMGRAAVACMKKRFSGKNIVAVTGGTTIEAVAEMMTPDSKNRELLFVPARGGLGEDVKNQANTICAHMAEKASGTYRLLFVPGQLSQGAYSSIIEEPSVKEVLNTIKSASMLVHGIGEAKTMAQRRNTPLEDLKKIDDNDAVTEAFGYYFNADGEVVHKVHSVGMQLDDIDAIPDIIAVAGGSSKAEAIEAYFKKPRNTVLVTDEGAAKKLLRDE.

The H-T-H motif DNA-binding region spans 37–56 (RRSLSASLGISERVLRGEVQ). Residues 149–152 (GGTT), Arg-175, Gln-185, 250–251 (RR), Glu-269, and Lys-310 each bind beta-D-fructose 1,6-bisphosphate.

It belongs to the SorC transcriptional regulatory family. In terms of assembly, homotetramer. Binds primarily as a dimer to each half-site of the full-length operator, with much higher affinity for the right site. Then, both dimers interact, bridging the two-half sites of the operator region.

With respect to regulation, stability and function are regulated by the effector molecule fructose-1,6-bisphosphate (FBP). In the presence of glucose, binding of FBP to the low-affinity sugar-binding site of CggR disrupts dimer/dimer bridging interactions and triggers a tetramer to dimer transition, which leaves two physically independent dimers on the target DNA and allows transcription of the downstream coding sequences by the RNA polymerase. In addition, FBP and several other phosphorylated compounds can bind to a high-affinity binding-site and protect CggR against aggregation and proteolysis. Functionally, in the absence of glucose, represses the transcription of the gapA operon, which encodes five key glycolytic enzymes. Binds specifically to the cggR-gapA promoter region and blocks the progression of the RNA polymerase, leading to the arrest of the transcription. The protein is Central glycolytic genes regulator (cggR) of Bacillus subtilis (strain 168).